The primary structure comprises 447 residues: N-succinylarginine dihydrolase (447 aa).

Substrate-binding positions include A19 to S28, N110, and H137 to R138. E174 is an active-site residue. R212 is a substrate binding site. The active site involves H248. Substrate is bound by residues D250 and N359. Residue C365 is the Nucleophile of the active site.

Belongs to the succinylarginine dihydrolase family. In terms of assembly, homodimer.

The catalysed reaction is N(2)-succinyl-L-arginine + 2 H2O + 2 H(+) = N(2)-succinyl-L-ornithine + 2 NH4(+) + CO2. The protein operates within amino-acid degradation; L-arginine degradation via AST pathway; L-glutamate and succinate from L-arginine: step 2/5. Catalyzes the hydrolysis of N(2)-succinylarginine into N(2)-succinylornithine, ammonia and CO(2). This Citrobacter koseri (strain ATCC BAA-895 / CDC 4225-83 / SGSC4696) protein is N-succinylarginine dihydrolase.